The sequence spans 637 residues: Probable ATP-binding protein YheS (637 aa).

ABC transporter domains lie at 2–246 (IVFS…AQQQ) and 313–527 (LKME…KQEN). ATP is bound by residues 34–41 (GKNGCGKS) and 345–352 (GRNGAGKS). The segment at 523-559 (QKQENQTDEAPKENANSAQARKDQKRREAELRAQTQP) is disordered. The segment covering 542–553 (ARKDQKRREAEL) has biased composition (basic and acidic residues).

Belongs to the ABC transporter superfamily. ABCF family. YheS subfamily.

Functionally, genetic data indicate it may be involved in ribosome assembly or function. Ectopic expression exacerbates the cold-sensitive growth phenotype of a bipA deletion. This Escherichia coli O6:H1 (strain CFT073 / ATCC 700928 / UPEC) protein is Probable ATP-binding protein YheS (yheS).